The primary structure comprises 236 residues: Probable transmembrane ascorbate ferrireductase 4 (236 aa).

A Cytochrome b561 domain is found at 14–210; sequence FARLSGLVVA…LGCIVITAAI (197 aa). 3 helical membrane passes run 17 to 37, 42 to 62, and 76 to 96; these read LSGL…PNLG, TLHP…AILI, and VHLW…WTKF. Residues His44, His77, and His110 each coordinate heme b. Helical transmembrane passes span 112–132, 144–164, and 191–211; these read WMGL…FMSF, TFLP…IATA, and VNGL…AAIL. Residue His149 participates in heme b binding.

As to quaternary structure, homodimer. Heme b serves as cofactor.

The protein localises to the membrane. It catalyses the reaction Fe(3+)(out) + L-ascorbate(in) = monodehydro-L-ascorbate radical(in) + Fe(2+)(out) + H(+). In terms of biological role, two-heme-containing cytochrome. May catalyze ascorbate-dependent trans-membrane ferric-chelate reduction. This is Probable transmembrane ascorbate ferrireductase 4 (CYB561D) from Arabidopsis thaliana (Mouse-ear cress).